A 122-amino-acid chain; its full sequence is Small ribosomal subunit protein uS13 (122 aa).

Positions 99 to 122 (RGQRTHTNARTRKGPAKAIAGKKK) are disordered.

It belongs to the universal ribosomal protein uS13 family. Part of the 30S ribosomal subunit. Forms a loose heterodimer with protein S19. Forms two bridges to the 50S subunit in the 70S ribosome.

Its function is as follows. Located at the top of the head of the 30S subunit, it contacts several helices of the 16S rRNA. In the 70S ribosome it contacts the 23S rRNA (bridge B1a) and protein L5 of the 50S subunit (bridge B1b), connecting the 2 subunits; these bridges are implicated in subunit movement. Contacts the tRNAs in the A and P-sites. This chain is Small ribosomal subunit protein uS13, found in Sinorhizobium medicae (strain WSM419) (Ensifer medicae).